Consider the following 314-residue polypeptide: MKKKIAEYEVGEQVDVFLLIKTATKGIASNGKPFLTVILQDPSGDIEAKLWDVSPEVEKQYVAETIVKVAGDILNYKGRIQLRVKQIRVANENEVTDISDFVEKAPVKKEDMVEKITQYIFEMRNPNIQRLTRHLLNKHQNEFLDYPAATKNHHEFVSGLAYHVVSMLDLAKAISNLYPSLDKDLLYAGVILHDLGKVIELSGPISTTYTLEGNLLGHISIMVNEIGKAADELQIDAEEVLILQHIVLSHHGKAEWGSPKPPLVKEAEILHYIDNLDAKMNMMDRALGRTKPGEYTERVFALDNRSFYKPSFHN.

Positions 163 to 279 (HVVSMLDLAK…LHYIDNLDAK (117 aa)) constitute an HD domain.

This sequence belongs to the YhaM family.

Functionally, shows a 3'-5' exoribonuclease activity. The polypeptide is 3'-5' exoribonuclease YhaM (Bacillus anthracis (strain CDC 684 / NRRL 3495)).